The following is a 305-amino-acid chain: Carbamate kinase (305 aa).

The protein belongs to the carbamate kinase family.

The protein resides in the cytoplasm. It carries out the reaction hydrogencarbonate + NH4(+) + ATP = carbamoyl phosphate + ADP + H2O + H(+). It participates in metabolic intermediate metabolism; carbamoyl phosphate degradation; CO(2) and NH(3) from carbamoyl phosphate: step 1/1. This chain is Carbamate kinase (arcC), found in Thermoplasma acidophilum (strain ATCC 25905 / DSM 1728 / JCM 9062 / NBRC 15155 / AMRC-C165).